Reading from the N-terminus, the 546-residue chain is DNA ligase (546 aa).

Glu244 serves as a coordination point for ATP. Lys246 (N6-AMP-lysine intermediate) is an active-site residue. 6 residues coordinate ATP: Arg251, Arg266, Glu295, Phe334, Arg405, and Lys411.

The protein belongs to the ATP-dependent DNA ligase family. It depends on Mg(2+) as a cofactor.

The catalysed reaction is ATP + (deoxyribonucleotide)n-3'-hydroxyl + 5'-phospho-(deoxyribonucleotide)m = (deoxyribonucleotide)n+m + AMP + diphosphate.. Its function is as follows. DNA ligase that seals nicks in double-stranded DNA during DNA replication, DNA recombination and DNA repair. This Methanocorpusculum labreanum (strain ATCC 43576 / DSM 4855 / Z) protein is DNA ligase.